A 100-amino-acid chain; its full sequence is Integration host factor subunit alpha (100 aa).

The disordered stretch occupies residues 54–73 (DLRDKRQRPGRNPKTGEEIP).

It belongs to the bacterial histone-like protein family. Heterodimer of an alpha and a beta chain.

In terms of biological role, this protein is one of the two subunits of integration host factor, a specific DNA-binding protein that functions in genetic recombination as well as in transcriptional and translational control. In Pseudomonas aeruginosa (strain UCBPP-PA14), this protein is Integration host factor subunit alpha.